We begin with the raw amino-acid sequence, 1139 residues long: Sterol regulatory element-binding protein 2 (1139 aa).

The segment at 1 to 50 (MDESSELGGLETMDTLTELGDELTLGDIDEMLQFVSNQVGEFPDLFSEQL) is transcriptional activation (acidic). The Cytoplasmic portion of the chain corresponds to 1–479 (MDESSELGGL…VALGMVDRSR (479 aa)). Disordered stretches follow at residues 48 to 104 (EQLC…SPST) and 119 to 143 (TPPRATPVLQPRPQPQPQPQPSAQL). Residues 61-77 (GSSSSSNSSSSSGSNSR) are compositionally biased toward low complexity. Over residues 90–104 (RSFSQVPLPTFSPST) the composition is skewed to polar residues. The span at 119-138 (TPPRATPVLQPRPQPQPQPQ) shows a compositional bias: pro residues. The interaction with LMNA stretch occupies residues 235-489 (QQVPVLVQPQ…ILLCVLTFLG (255 aa)). One can recognise a bHLH domain in the interval 328 to 378 (ERRTTHNIIEKRYRSSINDKIIELKDLVMGTDAKMHKSGVLRKAIDYIKYL). The segment at 378 to 399 (LQQVNHKLRQENMVLKLANQKN) is leucine-zipper. Residue lysine 462 forms a Glycyl lysine isopeptide (Lys-Gly) (interchain with G-Cter in SUMO2) linkage. The chain crosses the membrane as a helical span at residues 480 to 500 (ILLCVLTFLGLSFSPLTSLLQ). Residues 501 to 531 (WGGAHDTDQHPYSGSGRSVLSLESGSGGWFD) are Lumenal-facing. A helical transmembrane segment spans residues 532 to 552 (WMMPTLLLWLVNGVIVLSVFV). Topologically, residues 553 to 1139 (KLLVHGEPVI…LGGGTAIAAS (587 aa)) are cytoplasmic. Serine 1096 carries the phosphoserine modification.

It belongs to the SREBP family. In terms of assembly, homodimer; efficient DNA binding of the soluble transcription factor fragment requires dimerization with another bHLH protein. Interacts with LMNA. Forms a tight complex with SCAP, the SCAP-SREBP complex, in the endoplasmic reticulum membrane and the Golgi apparatus. Interacts with PAQR3; the interaction anchors the SCAP-SREBP complex to the Golgi apparatus in low cholesterol conditions. Interacts (via C-terminal domain) with RNF139. Processed in the Golgi apparatus, releasing the protein from the membrane. At low cholesterol the SCAP-SREBP complex is recruited into COPII vesicles for export from the endoplasmic reticulum. In the Golgi, complex SREBPs are cleaved sequentially by site-1 (MBTPS1, S1P) and site-2 (MBTPS2, S2P) proteases. The first cleavage by site-1 protease occurs within the luminal loop, the second cleavage by site-2 protease occurs within the first transmembrane domain, releasing the transcription factor from the Golgi membrane. Apoptosis triggers cleavage by the cysteine proteases caspase-3 and caspase-7. Cleavage and activation is induced by mediated cholesterol efflux. In terms of processing, phosphorylated by AMPK, leading to suppress protein processing and nuclear translocation, and repress target gene expression. Post-translationally, SCAP-free SREBF2 is ubiquitinated by the BCR(ARMC5) complex, leading to its degradation. Ubiquitinated; the nuclear form has a rapid turnover and is rapidly ubiquitinated and degraded by the proteasome in the nucleus.

It is found in the endoplasmic reticulum membrane. The protein localises to the golgi apparatus membrane. It localises to the cytoplasmic vesicle. The protein resides in the COPII-coated vesicle membrane. Its subcellular location is the nucleus. Activation by cleavage is down-regulated upon activation of SIRT3-dependent PRKAA1/AMPK-alpha signaling cascade which leads to inhibition of ATP-consuming lipogenesis to restore cellular energy balance. Functionally, precursor of the transcription factor form (Processed sterol regulatory element-binding protein 2), which is embedded in the endoplasmic reticulum membrane. Low sterol concentrations promote processing of this form, releasing the transcription factor form that translocates into the nucleus and activates transcription of genes involved in cholesterol biosynthesis. Its function is as follows. Key transcription factor that regulates expression of genes involved in cholesterol biosynthesis. Binds to the sterol regulatory element 1 (SRE-1) (5'-ATCACCCCAC-3'). Has dual sequence specificity binding to both an E-box motif (5'-ATCACGTGA-3') and to SRE-1 (5'-ATCACCCCAC-3'). Regulates transcription of genes related to cholesterol synthesis pathway. The chain is Sterol regulatory element-binding protein 2 (SREBF2) from Cricetulus griseus (Chinese hamster).